The following is a 303-amino-acid chain: Acetaldehyde dehydrogenase 1 (303 aa).

C130 acts as the Acyl-thioester intermediate in catalysis. NAD(+) contacts are provided by residues 161 to 169 (SVGPGTRKN) and N272.

Belongs to the acetaldehyde dehydrogenase family.

It carries out the reaction acetaldehyde + NAD(+) + CoA = acetyl-CoA + NADH + H(+). This chain is Acetaldehyde dehydrogenase 1, found in Cupriavidus metallidurans (strain ATCC 43123 / DSM 2839 / NBRC 102507 / CH34) (Ralstonia metallidurans).